Here is a 189-residue protein sequence, read N- to C-terminus: Putative ankyrin repeat protein L38 (189 aa).

The stretch at Tyr108–Lys137 is one ANK repeat.

The protein is Putative ankyrin repeat protein L38 of Acanthamoeba polyphaga mimivirus (APMV).